The sequence spans 235 residues: Large ribosomal subunit protein uL1 (235 aa).

Belongs to the universal ribosomal protein uL1 family. In terms of assembly, part of the 50S ribosomal subunit.

In terms of biological role, binds directly to 23S rRNA. The L1 stalk is quite mobile in the ribosome, and is involved in E site tRNA release. Protein L1 is also a translational repressor protein, it controls the translation of the L11 operon by binding to its mRNA. This chain is Large ribosomal subunit protein uL1, found in Prochlorococcus marinus (strain MIT 9215).